Consider the following 241-residue polypeptide: Glucosamine-6-phosphate deaminase (241 aa).

D67 acts as the Proton acceptor; for enolization step in catalysis. The active-site For ring-opening step is the N136. H138 functions as the Proton acceptor; for ring-opening step in the catalytic mechanism. The active-site For ring-opening step is E143.

The protein belongs to the glucosamine/galactosamine-6-phosphate isomerase family. NagB subfamily.

It catalyses the reaction alpha-D-glucosamine 6-phosphate + H2O = beta-D-fructose 6-phosphate + NH4(+). The protein operates within amino-sugar metabolism; N-acetylneuraminate degradation; D-fructose 6-phosphate from N-acetylneuraminate: step 5/5. Its function is as follows. Catalyzes the reversible isomerization-deamination of glucosamine 6-phosphate (GlcN6P) to form fructose 6-phosphate (Fru6P) and ammonium ion. The polypeptide is Glucosamine-6-phosphate deaminase (Clostridium tetani (strain Massachusetts / E88)).